A 327-amino-acid chain; its full sequence is GMP reductase (327 aa).

C176 acts as the Thioimidate intermediate in catalysis. 205–228 is a binding site for NADP(+); that stretch reads IIADGGIRTHGDIAKSIRFGASMV.

This sequence belongs to the IMPDH/GMPR family. GuaC type 2 subfamily.

The catalysed reaction is IMP + NH4(+) + NADP(+) = GMP + NADPH + 2 H(+). Its function is as follows. Catalyzes the irreversible NADPH-dependent deamination of GMP to IMP. It functions in the conversion of nucleobase, nucleoside and nucleotide derivatives of G to A nucleotides, and in maintaining the intracellular balance of A and G nucleotides. This Streptococcus pyogenes serotype M1 protein is GMP reductase.